The chain runs to 243 residues: DNA repair protein RecO (243 aa).

Belongs to the RecO family.

Functionally, involved in DNA repair and RecF pathway recombination. This chain is DNA repair protein RecO, found in Geobacter sulfurreducens (strain ATCC 51573 / DSM 12127 / PCA).